The sequence spans 340 residues: Organic solute transporter subunit alpha (340 aa).

Residues 1–52 (MEPDRTQIRLDPRYTADLLEILKTNYSVPSACFSYPPTAAQLLRALGPVDIS) are Extracellular-facing. The N-linked (GlcNAc...) asparagine glycan is linked to Asn25. A helical membrane pass occupies residues 53-73 (LMVIMTLFVLGSIAIFLEAAV). The Cytoplasmic segment spans residues 74–87 (YLHKNTRCPIKRKT). The chain crosses the membrane as a helical span at residues 88–108 (LIWCSSSPTIVSAFSCFGLWI). The Extracellular portion of the chain corresponds to 109-110 (PR). A helical membrane pass occupies residues 111-131 (ALTLVEMAITTFYSMCFYLLM). Topologically, residues 132-186 (QAMVEGFGGKEAVLRTLKDTPVMIHTGPCCCCCPCCPRIKITRKRLQLLLLGPIQ) are cytoplasmic. The helical transmembrane segment at 187-207 (YAFFKISLTLVGLFLIPDGIF) threads the bilayer. The Extracellular segment spans residues 208-219 (DPSDISEGSTAL). Residues 220–240 (WINTFLGVSTLSALWTIGIIF) traverse the membrane as a helical segment. Residues 241–255 (RQARLHLGEQNIGAK) lie on the Cytoplasmic side of the membrane. The chain crosses the membrane as a helical span at residues 256-276 (FVLFQALLILSALQPSIFSVL). At 277 to 295 (ASGGQIACSPPFSSKIRSQ) the chain is on the extracellular side. Residues 296-316 (VMNCHLLILESFLITVLTRIY) form a helical membrane-spanning segment. At 317–340 (YRRKDDKLGYEPFSSPDQDLNLKA) the chain is on the cytoplasmic side. Ser330 carries the post-translational modification Phosphoserine.

This sequence belongs to the OST-alpha family. In terms of assembly, interacts with SLC51B. The Ost-alpha/Ost-beta complex is a heterodimer composed of alpha (SLC51A) and beta (SLC51B) subunit.

The protein resides in the cell membrane. It localises to the endoplasmic reticulum membrane. The catalysed reaction is taurocholate(out) = taurocholate(in). The enzyme catalyses estrone 3-sulfate(out) = estrone 3-sulfate(in). It carries out the reaction dehydroepiandrosterone 3-sulfate(out) = dehydroepiandrosterone 3-sulfate(in). It catalyses the reaction tauroursodeoxycholate(out) = tauroursodeoxycholate(in). The catalysed reaction is glycoursodeoxycholate(out) = glycoursodeoxycholate(in). The enzyme catalyses glycocholate(out) = glycocholate(in). It carries out the reaction taurochenodeoxycholate(out) = taurochenodeoxycholate(in). It catalyses the reaction glycochenodeoxycholate(out) = glycochenodeoxycholate(in). The catalysed reaction is taurodeoxycholate(out) = taurodeoxycholate(in). The enzyme catalyses glycodeoxycholate(out) = glycodeoxycholate(in). It carries out the reaction prostaglandin E2(out) = prostaglandin E2(in). Functionally, essential component of the Ost-alpha/Ost-beta complex, a heterodimer that acts as the intestinal basolateral transporter responsible for bile acid export from enterocytes into portal blood. Efficiently transports the major species of bile acids (taurocholate). Taurine conjugates are transported more efficiently across the basolateral membrane than glycine-conjugated bile acids. Can also transport steroids such as estrone 3-sulfate and dehydroepiandrosterone 3-sulfate, therefore playing a role in the enterohepatic circulation of sterols. Able to transport eicosanoids such as prostaglandin E2. The protein is Organic solute transporter subunit alpha (SLC51A) of Bos taurus (Bovine).